A 222-amino-acid polypeptide reads, in one-letter code: Flagellin B5 (222 aa).

The propeptide occupies 1–4; that stretch reads MRRG.

It belongs to the archaeal flagellin family.

It localises to the archaeal flagellum. In terms of biological role, flagellin is the subunit protein which polymerizes to form the filaments of archaeal flagella. This is Flagellin B5 (flaB5) from Pyrococcus abyssi (strain GE5 / Orsay).